The primary structure comprises 327 residues: Phenylalanine--tRNA ligase alpha subunit (327 aa).

A Mg(2+)-binding site is contributed by Glu252.

This sequence belongs to the class-II aminoacyl-tRNA synthetase family. Phe-tRNA synthetase alpha subunit type 1 subfamily. In terms of assembly, tetramer of two alpha and two beta subunits. It depends on Mg(2+) as a cofactor.

The protein localises to the cytoplasm. It catalyses the reaction tRNA(Phe) + L-phenylalanine + ATP = L-phenylalanyl-tRNA(Phe) + AMP + diphosphate + H(+). The protein is Phenylalanine--tRNA ligase alpha subunit of Aliivibrio fischeri (strain ATCC 700601 / ES114) (Vibrio fischeri).